Here is a 408-residue protein sequence, read N- to C-terminus: Probable pectate lyase 18 (408 aa).

The N-terminal stretch at 1 to 24 (MKMQTKKLFITIVSFLLYAPLFLS) is a signal peptide. N-linked (GlcNAc...) asparagine glycosylation is present at Asn42. Asp206, Asp230, and Asp234 together coordinate Ca(2+). Residue Arg286 is part of the active site.

It belongs to the polysaccharide lyase 1 family. Requires Ca(2+) as cofactor. Expressed in flowers, but not in leaves.

It catalyses the reaction Eliminative cleavage of (1-&gt;4)-alpha-D-galacturonan to give oligosaccharides with 4-deoxy-alpha-D-galact-4-enuronosyl groups at their non-reducing ends.. It functions in the pathway glycan metabolism; pectin degradation; 2-dehydro-3-deoxy-D-gluconate from pectin: step 2/5. The sequence is that of Probable pectate lyase 18 from Arabidopsis thaliana (Mouse-ear cress).